We begin with the raw amino-acid sequence, 354 residues long: DNA polymerase IV (354 aa).

A UmuC domain is found at 6-187 (IIHVDCDCFY…LPVARLHGVG (182 aa)). Mg(2+)-binding residues include aspartate 10 and aspartate 105. The active site involves glutamate 106.

Belongs to the DNA polymerase type-Y family. In terms of assembly, monomer. Requires Mg(2+) as cofactor.

It is found in the cytoplasm. It catalyses the reaction DNA(n) + a 2'-deoxyribonucleoside 5'-triphosphate = DNA(n+1) + diphosphate. Poorly processive, error-prone DNA polymerase involved in untargeted mutagenesis. Copies undamaged DNA at stalled replication forks, which arise in vivo from mismatched or misaligned primer ends. These misaligned primers can be extended by PolIV. Exhibits no 3'-5' exonuclease (proofreading) activity. May be involved in translesional synthesis, in conjunction with the beta clamp from PolIII. This Pseudomonas putida (strain ATCC 700007 / DSM 6899 / JCM 31910 / BCRC 17059 / LMG 24140 / F1) protein is DNA polymerase IV.